Reading from the N-terminus, the 254-residue chain is Adenosylcobinamide-GDP ribazoletransferase (254 aa).

Transmembrane regions (helical) follow at residues 36–56, 61–81, 114–134, 138–158, 197–217, and 232–252; these read YYPLVGLILGGALWLALTLLL, PLVTAALLLALELILTGGIHL, ALSAMVYLLLKFSLLAGLLAL, LVPYLVLFMPILSRWIFLIGV, WVLQWPGIAGFILATLFILLF, and LYGASIELSELLFLLGAFPLL.

This sequence belongs to the CobS family. Requires Mg(2+) as cofactor.

It is found in the cell membrane. It catalyses the reaction alpha-ribazole + adenosylcob(III)inamide-GDP = adenosylcob(III)alamin + GMP + H(+). The enzyme catalyses alpha-ribazole 5'-phosphate + adenosylcob(III)inamide-GDP = adenosylcob(III)alamin 5'-phosphate + GMP + H(+). The protein operates within cofactor biosynthesis; adenosylcobalamin biosynthesis; adenosylcobalamin from cob(II)yrinate a,c-diamide: step 7/7. In terms of biological role, joins adenosylcobinamide-GDP and alpha-ribazole to generate adenosylcobalamin (Ado-cobalamin). Also synthesizes adenosylcobalamin 5'-phosphate from adenosylcobinamide-GDP and alpha-ribazole 5'-phosphate. The protein is Adenosylcobinamide-GDP ribazoletransferase of Desulfitobacterium hafniense (strain Y51).